A 361-amino-acid polypeptide reads, in one-letter code: Aurora kinase B-A (361 aa).

One can recognise a Protein kinase domain in the interval Phe-93–Val-343. ATP contacts are provided by residues Leu-99–Val-107 and Lys-122. Catalysis depends on Asp-216, which acts as the Proton acceptor.

The protein belongs to the protein kinase superfamily. Ser/Thr protein kinase family. Aurora subfamily. As to quaternary structure, component of the CPC at least composed of survivin/birc5, incenp, cdca8/borealin and/or cdca9/dasra-A, and aurkb/aurora-B. Interacts directly (via N-terminus and kinase domain) with incenp (via C terminus), and may weakly interact (via N-terminus) with birc5.1 to stabilize the complex. Interacts with mtus1. Mg(2+) serves as cofactor. In terms of processing, phosphorylated, stimulates kinase activity.

The protein localises to the nucleus. It is found in the chromosome. The enzyme catalyses L-seryl-[protein] + ATP = O-phospho-L-seryl-[protein] + ADP + H(+). It catalyses the reaction L-threonyl-[protein] + ATP = O-phospho-L-threonyl-[protein] + ADP + H(+). Its activity is regulated as follows. Kinase activity is stimulated by both birc5/survivin-binding and cell-cycle specific phosphorylation. In terms of biological role, serine/threonine-protein kinase component of the chromosomal passenger complex (CPC), a complex that acts as a key regulator of mitosis. The CPC complex has essential functions at the centromere in ensuring correct chromosome alignment and segregation and is required for chromatin-induced microtubule stabilization and spindle assembly. Involved in the bipolar attachment of spindle microtubules to kinetochores and is a key regulator for the onset of cytokinesis during mitosis. Required for central/midzone spindle assembly and cleavage furrow formation. Key component of the cytokinesis checkpoint, a process required to delay abscission to prevent both premature resolution of intercellular chromosome bridges and accumulation of DNA damage. Phosphorylates 'Ser-10' of histone H3 during mitosis. The sequence is that of Aurora kinase B-A (aurkb-a) from Xenopus laevis (African clawed frog).